A 221-amino-acid polypeptide reads, in one-letter code: Large ribosomal subunit protein uL4 (221 aa).

The interval 47–77 (GTASTKTRGEVSGGGRKPWIQKHTGRARQGS) is disordered.

Belongs to the universal ribosomal protein uL4 family. As to quaternary structure, part of the 50S ribosomal subunit.

Functionally, one of the primary rRNA binding proteins, this protein initially binds near the 5'-end of the 23S rRNA. It is important during the early stages of 50S assembly. It makes multiple contacts with different domains of the 23S rRNA in the assembled 50S subunit and ribosome. Forms part of the polypeptide exit tunnel. The polypeptide is Large ribosomal subunit protein uL4 (Thermosipho melanesiensis (strain DSM 12029 / CIP 104789 / BI429)).